The following is a 293-amino-acid chain: MPELPEVEVVRRGLAEHVTGRTVTAVRVHHPRAVRRHEAGPADLTARLLDTTITGTGRRGKYLWLTLGDGADEPLARRESNFALVVHLGMSGQMLLGDVPNANHLRIAALLDDGTTLSFVDQRTFGGWMLADLVTVDGSDVPAPVAHIARDPLDPLFDRDAVVKVLRRKHSEIKRQLLDQTVVSGIGNIYADESLWRAKINGARLASGVSRAKLAELLGAAADVMTDALAQGGTSFDSLYVNVNGESGYFDRSLDAYGREGEPCRRCGAIMRRDKFMNRSSFYCPRCQPRPRV.

Pro2 acts as the Schiff-base intermediate with DNA in catalysis. Residue Glu3 is the Proton donor of the active site. Lys61 functions as the Proton donor; for beta-elimination activity in the catalytic mechanism. The DNA site is built by His104, Arg123, and Lys169. The segment at Asp255–Pro289 adopts an FPG-type zinc-finger fold. Arg279 (proton donor; for delta-elimination activity) is an active-site residue.

It belongs to the FPG family. Monomer. Zn(2+) serves as cofactor.

It catalyses the reaction Hydrolysis of DNA containing ring-opened 7-methylguanine residues, releasing 2,6-diamino-4-hydroxy-5-(N-methyl)formamidopyrimidine.. The catalysed reaction is 2'-deoxyribonucleotide-(2'-deoxyribose 5'-phosphate)-2'-deoxyribonucleotide-DNA = a 3'-end 2'-deoxyribonucleotide-(2,3-dehydro-2,3-deoxyribose 5'-phosphate)-DNA + a 5'-end 5'-phospho-2'-deoxyribonucleoside-DNA + H(+). Functionally, involved in base excision repair of DNA damaged by oxidation or by mutagenic agents. Acts as a DNA glycosylase that recognizes and removes damaged bases. Has a preference for oxidized purines, such as 7,8-dihydro-8-oxoguanine (8-oxoG). Has AP (apurinic/apyrimidinic) lyase activity and introduces nicks in the DNA strand. Cleaves the DNA backbone by beta-delta elimination to generate a single-strand break at the site of the removed base with both 3'- and 5'-phosphates. This chain is Formamidopyrimidine-DNA glycosylase, found in Mycolicibacterium vanbaalenii (strain DSM 7251 / JCM 13017 / BCRC 16820 / KCTC 9966 / NRRL B-24157 / PYR-1) (Mycobacterium vanbaalenii).